The primary structure comprises 241 residues: Glutathione S-transferase theta-3 (241 aa).

In terms of domain architecture, GST N-terminal spans 2–82; it reads GLELYLDLMS…YLSRKYKAPD (81 aa). Glutathione contacts are provided by residues 53–54 and 66–67; these read KV and ES. The 135-residue stretch at 88-222 folds into the GST C-terminal domain; that stretch reads DLQTRARVDE…VVLKAKDMPP (135 aa).

The protein belongs to the GST superfamily. Theta family. Homodimer. Expressed strongly in liver, and at lower levels in kidney and testis.

The protein localises to the cytoplasm. The catalysed reaction is RX + glutathione = an S-substituted glutathione + a halide anion + H(+). Functionally, conjugation of reduced glutathione to a wide number of exogenous and endogenous hydrophobic electrophiles. Shows high activity towards 4-nitrobenzyl chloride (4-NBC). Also has lower activity towards 1,2-epoxy-3-(p-nitrophenoxy)propane (EPNP), cumene hydroperoxide, 1-chloro-2,4-dinitrobenzene (CDNB), 7-chloro-4-nitrobenzo-2-oxa-1,3-diazole (NBD-Cl), and ethacrynic acid. The chain is Glutathione S-transferase theta-3 from Mus musculus (Mouse).